Consider the following 273-residue polypeptide: Medium-wave-sensitive opsin 1 (273 aa).

Over 1-5 (APRWV) the chain is Extracellular. The helical transmembrane segment at 6–30 (YHLTSAWMVFVVIASVFTNGLVLAA) threads the bilayer. Residues 31–42 (TMRFKKLRHPLN) lie on the Cytoplasmic side of the membrane. The chain crosses the membrane as a helical span at residues 43–68 (WILVNLAIADLVETIIASTISVVNQM). Topologically, residues 69 to 82 (YGYFVLGHPLCVVE) are extracellular. A disulfide bridge connects residues C79 and C156. The chain crosses the membrane as a helical span at residues 83-102 (GYTASLCGITGLWSLAIISW). At 103-121 (ERWMVVCRPFGNVRFDAKL) the chain is on the cytoplasmic side. Residues 122 to 145 (AIAGIAFSWIWAAVWTAPPIFGWS) form a helical membrane-spanning segment. Residues 146 to 171 (RYWPHGLKTSCGPDVFSGSSYPGVQS) are Extracellular-facing. Residues 172-199 (YMIVLMITCCFIPLSVIVLCYLQVWLAI) traverse the membrane as a helical segment. At 200–221 (RAVAKQQKESESTQKAEKEVTR) the chain is on the cytoplasmic side. A helical transmembrane segment spans residues 222-245 (MVMVMIFAFCLCWGPYAFFACFAA). At 246–253 (AHPGYAFH) the chain is on the extracellular side. A helical membrane pass occupies residues 254 to 273 (PLVAALPAYFAKSATIYNPI). K265 is subject to N6-(retinylidene)lysine.

It belongs to the G-protein coupled receptor 1 family. Opsin subfamily. As to quaternary structure, monomer. Homodimer. Homotetramer. Post-translationally, O-glycosylated. Phosphorylated on some or all of the serine and threonine residues present in the C-terminal region. In terms of tissue distribution, the three color pigments are found in the cone photoreceptor cells.

Its subcellular location is the membrane. Visual pigments are the light-absorbing molecules that mediate vision. They consist of an apoprotein, opsin, covalently linked to cis-retinal. This Odocoileus virginianus virginianus (Virginia white-tailed deer) protein is Medium-wave-sensitive opsin 1 (OPN1MW).